The chain runs to 360 residues: Holliday junction branch migration complex subunit RuvB (360 aa).

The tract at residues 1-46 (MAIKRSGNSDRPAKNPSSTPGTNAPTLLSPTPTHQEKETSEEKIRP) is disordered. The tract at residues 13–205 (AKNPSSTPGT…FGLIQRLRFY (193 aa)) is large ATPase domain (RuvB-L). A compositionally biased stretch (polar residues) spans 15 to 33 (NPSSTPGTNAPTLLSPTPT). Residues 34-46 (HQEKETSEEKIRP) show a composition bias toward basic and acidic residues. Residues Ile44, Arg45, Gly86, Lys89, Thr90, Thr91, 152 to 154 (EDY), Arg195, Tyr205, and Arg242 contribute to the ATP site. Residue Thr90 coordinates Mg(2+). A small ATPAse domain (RuvB-S) region spans residues 206–276 (EVDELTLIVL…LASEALDIYQ (71 aa)). The tract at residues 279–360 (KQGLDWIDRL…LTSEEQLSIF (82 aa)) is head domain (RuvB-H). 2 residues coordinate DNA: Arg334 and Arg339.

This sequence belongs to the RuvB family. In terms of assembly, homohexamer. Forms an RuvA(8)-RuvB(12)-Holliday junction (HJ) complex. HJ DNA is sandwiched between 2 RuvA tetramers; dsDNA enters through RuvA and exits via RuvB. An RuvB hexamer assembles on each DNA strand where it exits the tetramer. Each RuvB hexamer is contacted by two RuvA subunits (via domain III) on 2 adjacent RuvB subunits; this complex drives branch migration. In the full resolvosome a probable DNA-RuvA(4)-RuvB(12)-RuvC(2) complex forms which resolves the HJ.

Its subcellular location is the cytoplasm. It catalyses the reaction ATP + H2O = ADP + phosphate + H(+). Functionally, the RuvA-RuvB-RuvC complex processes Holliday junction (HJ) DNA during genetic recombination and DNA repair, while the RuvA-RuvB complex plays an important role in the rescue of blocked DNA replication forks via replication fork reversal (RFR). RuvA specifically binds to HJ cruciform DNA, conferring on it an open structure. The RuvB hexamer acts as an ATP-dependent pump, pulling dsDNA into and through the RuvAB complex. RuvB forms 2 homohexamers on either side of HJ DNA bound by 1 or 2 RuvA tetramers; 4 subunits per hexamer contact DNA at a time. Coordinated motions by a converter formed by DNA-disengaged RuvB subunits stimulates ATP hydrolysis and nucleotide exchange. Immobilization of the converter enables RuvB to convert the ATP-contained energy into a lever motion, pulling 2 nucleotides of DNA out of the RuvA tetramer per ATP hydrolyzed, thus driving DNA branch migration. The RuvB motors rotate together with the DNA substrate, which together with the progressing nucleotide cycle form the mechanistic basis for DNA recombination by continuous HJ branch migration. Branch migration allows RuvC to scan DNA until it finds its consensus sequence, where it cleaves and resolves cruciform DNA. The chain is Holliday junction branch migration complex subunit RuvB from Rippkaea orientalis (strain PCC 8801 / RF-1) (Cyanothece sp. (strain PCC 8801)).